The following is a 97-amino-acid chain: Small ribosomal subunit protein bS6 (97 aa).

Belongs to the bacterial ribosomal protein bS6 family.

Functionally, binds together with bS18 to 16S ribosomal RNA. In Lactococcus lactis subsp. cremoris (strain MG1363), this protein is Small ribosomal subunit protein bS6.